The sequence spans 375 residues: Dual-specificity RNA methyltransferase RlmN (375 aa).

The Proton acceptor role is filled by glutamate 98. In terms of domain architecture, Radical SAM core spans glycine 106–aspartate 346. Cysteine 113 and cysteine 349 are oxidised to a cystine. 3 residues coordinate [4Fe-4S] cluster: cysteine 120, cysteine 124, and cysteine 127. Residues glycine 174–glutamate 175, serine 206, serine 228–histidine 230, and asparagine 306 each bind S-adenosyl-L-methionine. The active-site S-methylcysteine intermediate is cysteine 349.

It belongs to the radical SAM superfamily. RlmN family. [4Fe-4S] cluster is required as a cofactor.

It localises to the cytoplasm. The catalysed reaction is adenosine(2503) in 23S rRNA + 2 reduced [2Fe-2S]-[ferredoxin] + 2 S-adenosyl-L-methionine = 2-methyladenosine(2503) in 23S rRNA + 5'-deoxyadenosine + L-methionine + 2 oxidized [2Fe-2S]-[ferredoxin] + S-adenosyl-L-homocysteine. The enzyme catalyses adenosine(37) in tRNA + 2 reduced [2Fe-2S]-[ferredoxin] + 2 S-adenosyl-L-methionine = 2-methyladenosine(37) in tRNA + 5'-deoxyadenosine + L-methionine + 2 oxidized [2Fe-2S]-[ferredoxin] + S-adenosyl-L-homocysteine. Specifically methylates position 2 of adenine 2503 in 23S rRNA and position 2 of adenine 37 in tRNAs. m2A2503 modification seems to play a crucial role in the proofreading step occurring at the peptidyl transferase center and thus would serve to optimize ribosomal fidelity. This chain is Dual-specificity RNA methyltransferase RlmN, found in Chromohalobacter salexigens (strain ATCC BAA-138 / DSM 3043 / CIP 106854 / NCIMB 13768 / 1H11).